A 269-amino-acid polypeptide reads, in one-letter code: Cytochrome c oxidase subunit 3 (269 aa).

Transmembrane regions (helical) follow at residues 21 to 41 (PWPM…GLTA), 49 to 69 (MFML…FKDI), 90 to 110 (GFLM…WAFL), 132 to 152 (ISAA…GVTM), 167 to 187 (TLYG…FQGL), 205 to 225 (FFAL…MLAM), and 247 to 267 (ILYL…VYWW).

This sequence belongs to the cytochrome c oxidase subunit 3 family. Component of the cytochrome c oxidase (complex IV, CIV), a multisubunit enzyme composed of a catalytic core of 3 subunits and several supernumerary subunits. The complex exists as a monomer or a dimer and forms supercomplexes (SCs) in the inner mitochondrial membrane with ubiquinol-cytochrome c oxidoreductase (cytochrome b-c1 complex, complex III, CIII).

The protein localises to the mitochondrion inner membrane. It catalyses the reaction 4 Fe(II)-[cytochrome c] + O2 + 8 H(+)(in) = 4 Fe(III)-[cytochrome c] + 2 H2O + 4 H(+)(out). Component of the cytochrome c oxidase, the last enzyme in the mitochondrial electron transport chain which drives oxidative phosphorylation. The respiratory chain contains 3 multisubunit complexes succinate dehydrogenase (complex II, CII), ubiquinol-cytochrome c oxidoreductase (cytochrome b-c1 complex, complex III, CIII) and cytochrome c oxidase (complex IV, CIV), that cooperate to transfer electrons derived from NADH and succinate to molecular oxygen, creating an electrochemical gradient over the inner membrane that drives transmembrane transport and the ATP synthase. Cytochrome c oxidase is the component of the respiratory chain that catalyzes the reduction of oxygen to water. Electrons originating from reduced cytochrome c in the intermembrane space (IMS) are transferred via the dinuclear copper A center (CU(A)) of subunit 2 and heme A of subunit 1 to the active site in subunit 1, a binuclear center (BNC) formed by heme A3 and copper B (CU(B)). The BNC reduces molecular oxygen to 2 water molecules using 4 electrons from cytochrome c in the IMS and 4 protons from the mitochondrial matrix. In Debaryomyces hansenii (strain ATCC 36239 / CBS 767 / BCRC 21394 / JCM 1990 / NBRC 0083 / IGC 2968) (Yeast), this protein is Cytochrome c oxidase subunit 3 (COX3).